We begin with the raw amino-acid sequence, 361 residues long: MFTGCGLFACVRRCDGGDVRKRGEAGAMSSRVAADPAGVEEEGSCKNVAAASARQLAWADVESVTGGFSSRVIGHGGFSTVYLASLSSSRLGAVKVHCSSERLHRAFRQELEVLLSLRHPHIVRLLGYCDERDEGVLVFEYAPNGDLHERLHCSEVAGGVASVLPWARRVAIAFQVAMALEYLHESRHPAVIHGDIKASNVLLDANMNAKLCDFGFAHVGFSATVGCRPSARAVMGSPGYVDPHLIRSGVATKKSDVYSFGVLLLELVTGKEAVCRDTGRRLTAAVGPMLSEGKVADVVDRRLGGEHDGAEAAVMAELAMQCIGDSPGLRPSMADVVRALQEKTSALASAVGSRLDRKMMF.

3 S-palmitoyl cysteine lipidation sites follow: cysteine 5, cysteine 10, and cysteine 14. The Protein kinase domain maps to glycine 67–leucine 347. ATP contacts are provided by residues isoleucine 73–valine 81 and lysine 95. Aspartate 195 functions as the Proton acceptor in the catalytic mechanism.

It belongs to the protein kinase superfamily. Ser/Thr protein kinase family. Self-interacts. Interacts with CATA, CATB and CATC at the plasma membrane. Palmitoylated. Palmotylation at Cys-5, Cys-10 and Cys-14 by DHHC9 is required for plasma membrane targeting and STRK1 function. Post-translationally, autophosphorylated. As to expression, accumulates in seeds. Mainly expressed in young roots, and, to a lower extent, in leaf veins, seedlings, stems, leaf sheath and young spikelet.

Its subcellular location is the cell membrane. It carries out the reaction L-seryl-[protein] + ATP = O-phospho-L-seryl-[protein] + ADP + H(+). The enzyme catalyses L-threonyl-[protein] + ATP = O-phospho-L-threonyl-[protein] + ADP + H(+). It catalyses the reaction L-tyrosyl-[protein] + ATP = O-phospho-L-tyrosyl-[protein] + ADP + H(+). Functionally, acts probably as a dual specificity protein kinase. Regulates hydrogen peroxide (H(2)O(2)) homeostasis and improves salt tolerance by phosphorylating tyrosine residues of CATC thus activating its catalase activity. Promotes growth at the seedling stage and prevents grain yield loss under salt stress conditions. This Oryza sativa subsp. japonica (Rice) protein is Salt tolerance receptor-like cytoplasmic kinase 1.